Reading from the N-terminus, the 1220-residue chain is MAAREQANSVRRSGFFNPFIGKRPFFRPGSGQTAETERPRPPQHSYCTEVGSFKFIAPRCLDEEAPADQRRGVHVGTLERPPKVYCDGSEYDVLNFASGGCWPRRIRVWNGQDFRGDGFNPRFERFHVYDIVETSESASHDDPSRFAELSRPSGSVVTLLGMSECGKRVAVHVYGVRHYFYMAKAEVDSACGITTEAELVRAMVDCAHSSALSAALGNGNGGKQSGGSGGGWWGGKHVSADCFKVETVCHTTLYYFGSKPALYYRVSASSSRLGGFICDNFHPEITKFEGSVDVTTRLLLDNENFTSFGWYRLRPGTHGERVQLRPVERHVTSSDVEINCTPDNLEPIPDEAAWPDYKLMCFDIECKAGTGNEMAFPVATNQEDLVIQISCLLYSLATQNHEHTLLFSLGSCDISEEYSFACVQRGEPRPTVLEFDSEYELLVAFLTFLKQYSPEFATGYNIVNFDWAYIVNKVTSVYNIKLDGYGKFNKGGLFKVWDIATNHFQKKSKVKINGLISLDMYSVATEKLKLPSYKLDAVVGDVLGEHKIDLPYKEIPSYYAGGPDRRGVIGEYCIQDSRLVGKLFFKYLPHLELSAVAKLARITLTRVIFDGQQIRVYTCLLKLARERNFILPDNRRRFDSQADAASETSELAMDSQSHAFDSTDEPDGVDGTPDAAGSGATSENGGGKPGVGRAVGYQGAKVLDPVSGFHVDPVVVFDFASLYPSIIQAHNLCFTTLALDEVDLAGLQPSVDYSTFEVGDQKLFFVHAHIRESLLGILLRDWLAMRKAVRARIPTSTPEEAVLLDKQQSAIKVICNSVYGFTGVANGLLPCLRIAATVTTIGRDMLLKTRDYVHSRWATRELLEDNFPGAIGFRNHKPYSVRVIYGDTDSVFIKFVGLTYEGVSELGDAMSRQISADLFRAPIKLECEKTFQRLLLITKKKYIGVINGGKMLMKGVDLVRKNNCSFINLYARHLVDLLLYDEDVATAAAEVTDVPPAEWVGRPLPSGFDKFGRVLVEAYNRITAPNLDVREFVMTAELSRSPESYTNKRLPHLTVYFKLAMRNEELPSVKERIPYVIVAQTEAAEREAGVVNSMRGTAQNPVVTKTARPQPKRKLLVSDLAEDPTYVSENDVPLNTDYYFSHLLGTISVTFKALFGNDVRTTENLLKRFIPETPHKTPTKTQALLERAGFEKLTPFTPEEESRRILHTVFCTLEAAPHQS.

Disordered stretches follow at residues 21-43 (GKRPFFRPGSGQTAETERPRPPQ) and 641-691 (QADA…KPGV). Residues 646-660 (SETSELAMDSQSHAF) are compositionally biased toward polar residues.

It belongs to the DNA polymerase type-B family. As to quaternary structure, forms a complex with the ssDNA-binding protein, the DNA polymerase processivity factor, and the alkaline exonuclease. Interacts with the helicase-primase complex composed of the primase, the helicase and the primase-associated factor; this interaction may coordinate leading and lagging strand DNA synthesis at the replication fork.

The protein resides in the host nucleus. The enzyme catalyses DNA(n) + a 2'-deoxyribonucleoside 5'-triphosphate = DNA(n+1) + diphosphate. The catalysed reaction is Endonucleolytic cleavage to 5'-phosphomonoester.. Replicates viral genomic DNA. The replication complex is composed of six viral proteins: the DNA polymerase, processivity factor, primase, primase-associated factor, helicase, and ssDNA-binding protein. Additionally, the polymerase contains an intrinsic ribonuclease H (RNase H) activity that specifically degrades RNA/DNA heteroduplexes or duplex DNA substrates in the 5' to 3' direction. Therefore, it can catalyze the excision of the RNA primers that initiate the synthesis of Okazaki fragments at a replication fork during viral DNA replication. This is DNA polymerase catalytic subunit from Equine herpesvirus 1 (strain Ab4p) (EHV-1).